Reading from the N-terminus, the 199-residue chain is Recombination protein RecR (199 aa).

The segment at 57-72 (CPICGNITEKEICDIC) adopts a C4-type zinc-finger fold. Residues 80–176 (TTIMVVEQPK…KVTRLAAGLS (97 aa)) form the Toprim domain.

It belongs to the RecR family.

In terms of biological role, may play a role in DNA repair. It seems to be involved in an RecBC-independent recombinational process of DNA repair. It may act with RecF and RecO. The polypeptide is Recombination protein RecR (Lactobacillus acidophilus (strain ATCC 700396 / NCK56 / N2 / NCFM)).